We begin with the raw amino-acid sequence, 388 residues long: Chalcone synthase (388 aa).

The active site involves Cys-164.

This sequence belongs to the thiolase-like superfamily. Chalcone/stilbene synthases family.

It carries out the reaction (E)-4-coumaroyl-CoA + 3 malonyl-CoA + 3 H(+) = 2',4,4',6'-tetrahydroxychalcone + 3 CO2 + 4 CoA. It functions in the pathway secondary metabolite biosynthesis; flavonoid biosynthesis. Its function is as follows. The primary product of this enzyme is 4,2',4',6'-tetrahydroxychalcone (also termed naringenin-chalcone or chalcone) which can under specific conditions spontaneously isomerize into naringenin. The polypeptide is Chalcone synthase (CHS) (Vigna unguiculata (Cowpea)).